A 401-amino-acid polypeptide reads, in one-letter code: uncharacterized protein (401 aa).

Residues Cys7, Cys13, Cys16, and Cys94 each coordinate [4Fe-4S] cluster. 4 residues coordinate S-adenosyl-L-methionine: Gln230, Tyr259, Glu280, and Asp328. Cys355 acts as the Nucleophile in catalysis.

It belongs to the class I-like SAM-binding methyltransferase superfamily. RNA M5U methyltransferase family.

This is an uncharacterized protein from Chlamydia caviae (strain ATCC VR-813 / DSM 19441 / 03DC25 / GPIC) (Chlamydophila caviae).